Here is a 490-residue protein sequence, read N- to C-terminus: Phosphoglucosamine mutase (490 aa).

The active-site Phosphoserine intermediate is Ser139. Ser139, Asp279, Asp281, and Asp283 together coordinate Mg(2+). Ser139 carries the post-translational modification Phosphoserine.

This sequence belongs to the phosphohexose mutase family. Mg(2+) is required as a cofactor. Post-translationally, activated by phosphorylation.

The enzyme catalyses alpha-D-glucosamine 1-phosphate = D-glucosamine 6-phosphate. Functionally, catalyzes the conversion of glucosamine-6-phosphate to glucosamine-1-phosphate. The polypeptide is Phosphoglucosamine mutase (Trichormus variabilis (strain ATCC 29413 / PCC 7937) (Anabaena variabilis)).